Here is a 271-residue protein sequence, read N- to C-terminus: Formamidopyrimidine-DNA glycosylase (271 aa).

The active-site Schiff-base intermediate with DNA is the Pro2. Residue Glu3 is the Proton donor of the active site. The active-site Proton donor; for beta-elimination activity is the Lys58. DNA is bound by residues His92, Arg111, and Arg152. Residues 237 to 271 (FVYGREGEACKQCGRVLKHATIGQRATVWCGSCQR) form an FPG-type zinc finger. The active-site Proton donor; for delta-elimination activity is Arg261.

Belongs to the FPG family. As to quaternary structure, monomer. It depends on Zn(2+) as a cofactor.

The enzyme catalyses Hydrolysis of DNA containing ring-opened 7-methylguanine residues, releasing 2,6-diamino-4-hydroxy-5-(N-methyl)formamidopyrimidine.. The catalysed reaction is 2'-deoxyribonucleotide-(2'-deoxyribose 5'-phosphate)-2'-deoxyribonucleotide-DNA = a 3'-end 2'-deoxyribonucleotide-(2,3-dehydro-2,3-deoxyribose 5'-phosphate)-DNA + a 5'-end 5'-phospho-2'-deoxyribonucleoside-DNA + H(+). Functionally, involved in base excision repair of DNA damaged by oxidation or by mutagenic agents. Acts as a DNA glycosylase that recognizes and removes damaged bases. Has a preference for oxidized purines, such as 7,8-dihydro-8-oxoguanine (8-oxoG). Has AP (apurinic/apyrimidinic) lyase activity and introduces nicks in the DNA strand. Cleaves the DNA backbone by beta-delta elimination to generate a single-strand break at the site of the removed base with both 3'- and 5'-phosphates. The polypeptide is Formamidopyrimidine-DNA glycosylase (Xanthomonas axonopodis pv. citri (strain 306)).